A 293-amino-acid polypeptide reads, in one-letter code: Triosephosphate isomerase (293 aa).

25–27 (NWK) serves as a coordination point for substrate. Histidine 117 functions as the Electrophile in the catalytic mechanism. Glutamate 218 acts as the Proton acceptor in catalysis.

This sequence belongs to the triosephosphate isomerase family. As to quaternary structure, homodimer.

Its subcellular location is the cytoplasm. It catalyses the reaction D-glyceraldehyde 3-phosphate = dihydroxyacetone phosphate. It functions in the pathway carbohydrate biosynthesis; gluconeogenesis. It participates in carbohydrate degradation; glycolysis; D-glyceraldehyde 3-phosphate from glycerone phosphate: step 1/1. In terms of biological role, involved in the gluconeogenesis. Catalyzes stereospecifically the conversion of dihydroxyacetone phosphate (DHAP) to D-glyceraldehyde-3-phosphate (G3P). The sequence is that of Triosephosphate isomerase from Tropheryma whipplei (strain TW08/27) (Whipple's bacillus).